Consider the following 124-residue polypeptide: UPF0102 protein Noca_3248 (124 aa).

It belongs to the UPF0102 family.

The sequence is that of UPF0102 protein Noca_3248 from Nocardioides sp. (strain ATCC BAA-499 / JS614).